A 680-amino-acid polypeptide reads, in one-letter code: Tumor protein 63 (680 aa).

The segment at 1–107 (MNFETSRCAT…MQDSDLSDPM (107 aa)) is transcription activation. The span at 122-157 (QQIQNGSSSTSPYNTDHAQNSVTAPSPYAQPSSTFD) shows a compositional bias: polar residues. The interval 122 to 171 (QQIQNGSSSTSPYNTDHAQNSVTAPSPYAQPSSTFDALSPSPAIPSNTDY) is disordered. The DNA-binding element occupies 170–362 (DYPGPHSFDV…KADEDSIRKQ (193 aa)). C244, H247, C308, and C312 together coordinate Zn(2+). The segment covering 351-360 (DRKADEDSIR) has biased composition (basic and acidic residues). 2 disordered regions span residues 351–393 (DRKA…IKKR) and 436–472 (RQQQ…MNSM). Positions 352 to 388 (RKADEDSIRKQQVSDSAKNGDGTKRPFRQNTHGIQMT) are interaction with HIPK2. The segment covering 379–389 (RQNTHGIQMTS) has biased composition (polar residues). The tract at residues 394 to 443 (RSPDDELLYLPVRGRETYEMLLKIKESLELMQYLPQHTIETYRQQQQQQH) is oligomerization. Residues 437–463 (QQQQQQHQHLLQKQTSMQSQSSYGNSS) show a composition bias toward low complexity. Positions 541 to 607 (PPYPTDCSIV…WKGILDHRQL (67 aa)) constitute an SAM domain. The segment at 610–680 (FSSPPHLLRT…KQQRIKEEGE (71 aa)) is transactivation inhibition. K676 participates in a covalent cross-link: Glycyl lysine isopeptide (Lys-Gly) (interchain with G-Cter in SUMO).

This sequence belongs to the p53 family. Binds DNA as a homotetramer. Isoform composition of the tetramer may determine transactivation activity. Interacts with HIPK2. Interacts with SSRP1, leading to stimulate coactivator activity. Interacts with WWP1. Interacts with PDS5A. Interacts (via activation domain) with NOC2L. It depends on Zn(2+) as a cofactor. Post-translationally, may be sumoylated. Ubiquitinated. Polyubiquitination involves WWP1 and leads to proteasomal degradation of this protein. In terms of tissue distribution, widely expressed, notably in thymus, prostate, placenta, and skeletal muscle, although the precise isoform varies according to tissue type. Progenitor cell layers of skin, breast and prostate express high levels of DeltaN-type isoforms.

Its subcellular location is the nucleus. Functionally, acts as a sequence specific DNA binding transcriptional activator or repressor. The isoforms contain a varying set of transactivation and auto-regulating transactivation inhibiting domains thus showing an isoform specific activity. May be required in conjunction with TP73/p73 for initiation of p53/TP53 dependent apoptosis in response to genotoxic insults and the presence of activated oncogenes. Involved in Notch signaling by probably inducing JAG1 and JAG2. Activates RIPK4 transcription. Plays a role in the regulation of epithelial morphogenesis. The ratio of DeltaN-type and TA*-type isoforms may govern the maintenance of epithelial stem cell compartments and regulate the initiation of epithelial stratification from the undifferentiated embryonal ectoderm. Required for limb formation from the apical ectodermal ridge. Activates transcription of the p21 promoter. The protein is Tumor protein 63 (Tp63) of Rattus norvegicus (Rat).